A 175-amino-acid chain; its full sequence is MPLPEPLNIKAWVEENEHLLKPPVNNFCLHRGGFTVMIVGGPNERSDYHINQTPEYFYQYKGTMCLKVVDEGKFRDIYIREGDTFLLPPNVPHNPCRFENTVGIVVEQDRPKGVNDRIRWYCARCESIVCEEEFYLTDLGTQIKDAIVAFDSNIEAKTCKNCGHVNSSKREPAEF.

Residue R45 coordinates O2. Fe cation-binding residues include H49, E55, and H93. Substrate is bound at residue E55. 2 residues coordinate substrate: R97 and E107. A divalent metal cation contacts are provided by C122, C125, C159, and C162.

The protein belongs to the 3-HAO family. Requires Fe(2+) as cofactor.

It localises to the cytoplasm. The enzyme catalyses 3-hydroxyanthranilate + O2 = (2Z,4Z)-2-amino-3-carboxymuconate 6-semialdehyde. The protein operates within cofactor biosynthesis; NAD(+) biosynthesis; quinolinate from L-kynurenine: step 3/3. Its function is as follows. Catalyzes the oxidative ring opening of 3-hydroxyanthranilate to 2-amino-3-carboxymuconate semialdehyde, which spontaneously cyclizes to quinolinate. The chain is 3-hydroxyanthranilate 3,4-dioxygenase from Lodderomyces elongisporus (strain ATCC 11503 / CBS 2605 / JCM 1781 / NBRC 1676 / NRRL YB-4239) (Yeast).